A 689-amino-acid polypeptide reads, in one-letter code: uncharacterized protein (689 aa).

Disordered regions lie at residues 121–206 (LALK…VDPS), 286–305 (ASSNQSAAHPDGNNALPMDN), 322–414 (NSYS…SMAH), and 552–611 (AAMP…HLSD). The segment covering 133–158 (SPNNSIPLMANSCLLSADNSSSSTTS) has biased composition (low complexity). The segment covering 322–380 (NSYSYDRYTPNQPSYLESKPGNHQPSYTSEQPMYSTASVPQQISNGPTAVNGLPMNSYT) has biased composition (polar residues). Low complexity-rich tracts occupy residues 381-411 (PHSNHLHSPSPNSNSGPTDSLSAPNSTSSPS) and 560-572 (PSAHDSASAPSPH).

The protein localises to the cytoplasm. This is an uncharacterized protein from Schizosaccharomyces pombe (strain 972 / ATCC 24843) (Fission yeast).